The chain runs to 117 residues: Large ribosomal subunit protein bL20 (117 aa).

It belongs to the bacterial ribosomal protein bL20 family.

Its function is as follows. Binds directly to 23S ribosomal RNA and is necessary for the in vitro assembly process of the 50S ribosomal subunit. It is not involved in the protein synthesizing functions of that subunit. The sequence is that of Large ribosomal subunit protein bL20 from Carboxydothermus hydrogenoformans (strain ATCC BAA-161 / DSM 6008 / Z-2901).